We begin with the raw amino-acid sequence, 417 residues long: Probable glucuronosyltransferase GUT1 (417 aa).

At 1–15 (MGTRRRSARARARPP) the chain is on the cytoplasmic side. Residues 16-36 (LAMPLAVLLLFACSSGVAAAA) traverse the membrane as a helical; Signal-anchor for type II membrane protein segment. Topologically, residues 37–417 (AQGIERIKDD…EGTREDLKPW (381 aa)) are lumenal. N-linked (GlcNAc...) asparagine glycans are attached at residues Asn144 and Asn405.

This sequence belongs to the glycosyltransferase 47 family.

It localises to the golgi apparatus membrane. Its function is as follows. Involved in the synthesis of glucuronoxylan hemicellulose in secondary cell walls. This Oryza sativa subsp. japonica (Rice) protein is Probable glucuronosyltransferase GUT1 (GUT1).